The primary structure comprises 812 residues: Protein FAM83G (812 aa).

Ala2 carries the post-translational modification N-acetylalanine. The DUF1669 stretch occupies residues 2 to 312 (AFSQVQCLDD…LYLMSQSVSL (311 aa)). Ser4 carries the post-translational modification Phosphoserine. The disordered stretch occupies residues 76–119 (PGSEDPRVSGRRPEPQDNGGADASEETSAAGGPPATETLPSLEY). Basic and acidic residues predominate over residues 79-90 (EDPRVSGRRPEP). A phosphoserine mark is found at Ser124, Ser127, and Ser356. Disordered regions lie at residues 362–389 (KSSS…GDLS), 455–509 (ASAQ…KPRT), and 521–812 (SDIG…HKEP). The span at 455–467 (ASAQHQLWKQSQG) shows a compositional bias: polar residues. Positions 471-480 (CPAPCPPPAP) are enriched in pro residues. The span at 545-562 (STASESEVPQQQHSSMTQ) shows a compositional bias: polar residues. The segment covering 576–586 (LDEDEDDDDDY) has biased composition (acidic residues). The span at 589 to 598 (LSDQDSLSGS) shows a compositional bias: low complexity. 4 positions are modified to phosphoserine: Ser609, Ser613, Ser615, and Ser649. The segment covering 721–731 (SSSKKASPAAA) has biased composition (low complexity). The segment covering 761-772 (LRAELRATEEHA) has biased composition (basic and acidic residues).

It belongs to the FAM83 family. As to quaternary structure, interacts with SMAD1 (via MH2 domain); in a SMAD4-independent manner. Directly interacts (via DUF1669) with casein kinase isoforms CSNK1A1 and CSNK1A1L. BMP signaling induces the phosphorylation by BMPR1A at Ser-609, Ser-613 and Ser-615. Phosphorylation at Ser-609 is necessary for the activation of SMAD4-independent BMP target genes such as NEDD9 and ASNS. Post-translationally, phosphorylated by CSNK1A1.

The protein localises to the cytoplasm. It localises to the cytosol. Its subcellular location is the nucleus. In terms of biological role, substrate for type I BMP receptor kinase involved in regulation of some target genes of the BMP signaling pathway. Also regulates the expression of several non-BMP target genes, suggesting a role in other signaling pathways. This is Protein FAM83G (Fam83g) from Mus musculus (Mouse).